The following is a 162-amino-acid chain: uncharacterized protein (162 aa).

A helical membrane pass occupies residues 5–25; that stretch reads IIILFLFTAILCSITLCGCIS.

Its subcellular location is the membrane. This is an uncharacterized protein from Methanocaldococcus jannaschii (strain ATCC 43067 / DSM 2661 / JAL-1 / JCM 10045 / NBRC 100440) (Methanococcus jannaschii).